A 432-amino-acid polypeptide reads, in one-letter code: MQGNLEVLEGLARRLDISVPVDQLETEVQSRLKRLARSVKMHGFRPGKAPLSAVARQHGAGVRQEVLGETLKTRFGEAVQTHQLRIAGYPRFEPKADASAAAEMTFSASFEVYPEVKIDALDSATLNRPVVELGDADVAKTLEVLQKQRRTFATAARAAAEGDLVKFDYQGTVDGAPFEGGRGEDFAAVIGEGRLLKDFEQALVGLKAGDSKGFDLTFPAEYAARELADKTAHFEVQVKEVQAPVLPPVDAEFAEALGVEDGDVEKLKAEVKSNLEREVKRRVQAKLKEQAMELLLQKSTLDLPRSLVEMEMDRLRRMTEADMQSRGVQSMKLSADMFTGQAERRVRLGLILAEIVQANKLAAQPEQIRSLIQDQAQSYEEPDQVVQWYYQSPERMQEIESLALEENVVAWVADQATVVDVATSFDELMGRA.

One can recognise a PPIase FKBP-type domain in the interval 162–247 (GDLVKFDYQG…VKEVQAPVLP (86 aa)).

It belongs to the FKBP-type PPIase family. Tig subfamily.

The protein localises to the cytoplasm. The catalysed reaction is [protein]-peptidylproline (omega=180) = [protein]-peptidylproline (omega=0). Functionally, involved in protein export. Acts as a chaperone by maintaining the newly synthesized protein in an open conformation. Functions as a peptidyl-prolyl cis-trans isomerase. In Thiobacillus denitrificans (strain ATCC 25259 / T1), this protein is Trigger factor.